Reading from the N-terminus, the 358-residue chain is Peptide chain release factor 1 (358 aa).

Residue Q235 is modified to N5-methylglutamine.

The protein belongs to the prokaryotic/mitochondrial release factor family. Post-translationally, methylated by PrmC. Methylation increases the termination efficiency of RF1.

The protein localises to the cytoplasm. In terms of biological role, peptide chain release factor 1 directs the termination of translation in response to the peptide chain termination codons UAG and UAA. In Neisseria meningitidis serogroup C (strain 053442), this protein is Peptide chain release factor 1.